A 229-amino-acid chain; its full sequence is Protein N-lysine methyltransferase METTL21D (229 aa).

Position 2 is an N-acetylalanine (alanine 2). Residue serine 8 is modified to Phosphoserine. Residues tryptophan 43, 75-77 (GSG), aspartate 96, tryptophan 126, alanine 143, and tyrosine 148 each bind S-adenosyl-L-methionine.

It belongs to the methyltransferase superfamily. METTL21 family. As to quaternary structure, interacts with ALKBH6. Interacts with ASPSCR1 and UBXN6; interaction with ASPSCR1, but not with UBXN6, enhances VCP methylation.

The protein localises to the cytoplasm. It carries out the reaction L-lysyl-[protein] + 3 S-adenosyl-L-methionine = N(6),N(6),N(6)-trimethyl-L-lysyl-[protein] + 3 S-adenosyl-L-homocysteine + 3 H(+). Its function is as follows. Protein N-lysine methyltransferase that specifically trimethylates 'Lys-315' of VCP/p97; this modification may decrease VCP ATPase activity. In Homo sapiens (Human), this protein is Protein N-lysine methyltransferase METTL21D (VCPKMT).